We begin with the raw amino-acid sequence, 700 residues long: Methionine--tRNA ligase (700 aa).

A 'HIGH' region motif is present at residues 12 to 22 (PYANGNFHIGH). Residues cysteine 143, cysteine 146, cysteine 156, and cysteine 159 each coordinate Zn(2+). The 'KMSKS' region signature appears at 348–352 (KMSKS). Lysine 351 is a binding site for ATP. The tRNA-binding domain occupies 594-700 (DFSKIDLRIA…AGAQPGMRVH (107 aa)).

Belongs to the class-I aminoacyl-tRNA synthetase family. MetG type 1 subfamily. As to quaternary structure, homodimer. Zn(2+) is required as a cofactor.

Its subcellular location is the cytoplasm. It carries out the reaction tRNA(Met) + L-methionine + ATP = L-methionyl-tRNA(Met) + AMP + diphosphate. Functionally, is required not only for elongation of protein synthesis but also for the initiation of all mRNA translation through initiator tRNA(fMet) aminoacylation. The protein is Methionine--tRNA ligase of Albidiferax ferrireducens (strain ATCC BAA-621 / DSM 15236 / T118) (Rhodoferax ferrireducens).